We begin with the raw amino-acid sequence, 498 residues long: Pyruvate kinase (498 aa).

Arg-53 contributes to the substrate binding site. K(+) contacts are provided by Asn-55, Ser-57, Asp-87, and Thr-88. 55–58 (NFSH) lines the ATP pocket. The ATP site is built by Arg-94 and Lys-178. Position 240 (Glu-240) interacts with Mg(2+). Substrate is bound by residues Gly-263, Asp-264, and Thr-296. Asp-264 lines the Mg(2+) pocket.

Belongs to the pyruvate kinase family. In terms of assembly, homotetramer. Mg(2+) serves as cofactor. The cofactor is K(+).

The catalysed reaction is pyruvate + ATP = phosphoenolpyruvate + ADP + H(+). It participates in carbohydrate degradation; glycolysis; pyruvate from D-glyceraldehyde 3-phosphate: step 5/5. The polypeptide is Pyruvate kinase (PYK) (Trypanoplasma borreli).